A 617-amino-acid polypeptide reads, in one-letter code: Probable Xaa-Pro aminopeptidase P (617 aa).

Residues Asp414, Asp425, Glu523, and Glu537 each contribute to the Mn(2+) site.

This sequence belongs to the peptidase M24B family. The cofactor is Mn(2+).

It carries out the reaction Release of any N-terminal amino acid, including proline, that is linked to proline, even from a dipeptide or tripeptide.. Its function is as follows. Catalyzes the removal of a penultimate prolyl residue from the N-termini of peptides. This Colletotrichum graminicola (strain M1.001 / M2 / FGSC 10212) (Maize anthracnose fungus) protein is Probable Xaa-Pro aminopeptidase P (AMPP).